A 74-amino-acid chain; its full sequence is Small ribosomal subunit protein eS28 (74 aa).

It belongs to the eukaryotic ribosomal protein eS28 family.

The chain is Small ribosomal subunit protein eS28 from Halobacterium salinarum (strain ATCC 29341 / DSM 671 / R1).